Here is a 351-residue protein sequence, read N- to C-terminus: Penicillolysin (351 aa).

The first 19 residues, methionine 1 to alanine 19, serve as a signal peptide directing secretion. Positions phenylalanine 20–arginine 174 are excised as a propeptide. N-linked (GlcNAc...) asparagine glycosylation is found at asparagine 52 and asparagine 181. Residue histidine 302 coordinates Zn(2+). Glutamate 303 is an active-site residue. Zn(2+)-binding residues include histidine 306 and aspartate 317.

The protein belongs to the peptidase M35 family. The cofactor is Zn(2+).

The enzyme catalyses Preferential cleavage of bonds with hydrophobic residues in P1'. Also 3-Asn-|-Gln-4 and 8-Gly-|-Ser-9 bonds in insulin B chain.. The sequence is that of Penicillolysin (plnC) from Penicillium citrinum.